The chain runs to 152 residues: Large ribosomal subunit protein uL13 (152 aa).

Positions 129 to 152 (EHPHEAQSPEVLDVKSMNKKNTRS) are disordered.

This sequence belongs to the universal ribosomal protein uL13 family. In terms of assembly, part of the 50S ribosomal subunit.

This protein is one of the early assembly proteins of the 50S ribosomal subunit, although it is not seen to bind rRNA by itself. It is important during the early stages of 50S assembly. The polypeptide is Large ribosomal subunit protein uL13 (Ruegeria sp. (strain TM1040) (Silicibacter sp.)).